Consider the following 121-residue polypeptide: DNA-directed RNA polymerase subunit omega (121 aa).

Residues 95–121 (DGDAANDLQGEEDDLGLGLDEAEDLGF) form a disordered region. Acidic residues predominate over residues 103–121 (QGEEDDLGLGLDEAEDLGF).

Belongs to the RNA polymerase subunit omega family. The RNAP catalytic core consists of 2 alpha, 1 beta, 1 beta' and 1 omega subunit. When a sigma factor is associated with the core the holoenzyme is formed, which can initiate transcription.

The catalysed reaction is RNA(n) + a ribonucleoside 5'-triphosphate = RNA(n+1) + diphosphate. Its function is as follows. Promotes RNA polymerase assembly. Latches the N- and C-terminal regions of the beta' subunit thereby facilitating its interaction with the beta and alpha subunits. This Magnetococcus marinus (strain ATCC BAA-1437 / JCM 17883 / MC-1) protein is DNA-directed RNA polymerase subunit omega.